The primary structure comprises 354 residues: Putative Xaa-Pro aminopeptidase (354 aa).

Asp-213, Asp-224, His-290, Glu-319, and Glu-333 together coordinate Mn(2+).

It belongs to the peptidase M24B family. Mn(2+) is required as a cofactor.

The enzyme catalyses Release of any N-terminal amino acid, including proline, that is linked to proline, even from a dipeptide or tripeptide.. This is Putative Xaa-Pro aminopeptidase (pepP) from Mycoplasma pneumoniae (strain ATCC 29342 / M129 / Subtype 1) (Mycoplasmoides pneumoniae).